The sequence spans 148 residues: Ribonuclease H (148 aa).

The region spanning 3–144 (DKEQVVIYTD…ADQLANRGVA (142 aa)) is the RNase H type-1 domain. The Mg(2+) site is built by Asp-12, Glu-50, Asp-72, and Asp-136. Residues 125–148 (GHTGDPGNERADQLANRGVAELPR) form a disordered region.

This sequence belongs to the RNase H family. Monomer. Mg(2+) serves as cofactor.

Its subcellular location is the cytoplasm. The catalysed reaction is Endonucleolytic cleavage to 5'-phosphomonoester.. Endonuclease that specifically degrades the RNA of RNA-DNA hybrids. The polypeptide is Ribonuclease H (Pseudomonas aeruginosa (strain LESB58)).